The sequence spans 898 residues: Serine/threonine-protein kinase TAO3 (898 aa).

The Protein kinase domain occupies 24 to 277; that stretch reads FIGLHEIGHG…SAELLRHDFV (254 aa). Residues 30 to 38 and Lys-53 contribute to the ATP site; that span reads IGHGSFGAV. Asp-147 functions as the Proton acceptor in the catalytic mechanism. Disordered regions lie at residues 316 to 362 and 405 to 425; these read TRNG…SQSS and DEAG…VQSQ. Ser-324 is subject to Phosphoserine; by ATM. Ser-331, Ser-343, Ser-346, and Ser-349 each carry phosphoserine. Polar residues predominate over residues 334-351; it reads GTSLNREMDSLGSNHSIP. Low complexity predominate over residues 352–362; sequence SMSVSTGSQSS. Phosphothreonine is present on Thr-357. At Ser-359 the chain carries Phosphoserine. Positions 405–416 are enriched in basic and acidic residues; the sequence is DEAGHGDPRPEP. Ser-442 is subject to Phosphoserine. Coiled coils occupy residues 452–502, 548–649, and 754–879; these read EQEN…THAN, FLES…HAML, and LKTL…DMES. Residues 565-596 are disordered; sequence EEMNEDHSTPKKEKQERISKHKENLQHTQAEE. An N6-acetyllysine modification is found at Lys-830.

Belongs to the protein kinase superfamily. STE Ser/Thr protein kinase family. STE20 subfamily. As to quaternary structure, self-associates. Interacts with ERN1 and TRAF2. Interaction with TRAF2 is facilitated under ER stress conditions, such as treatment with tunicamycin, and may promote TRAF2 phosphorylation. Interacts (via N-terminus) with STK25; the interaction promotes STK25 abundance at the level of protein expression and/or stability. Post-translationally, autophosphorylated. Phosphorylation at Ser-324 by ATM following DNA damage is required for activation of the p38/MAPK14 stress-activated MAPK cascade. Phosphorylated at Ser-324 and on Tyr residues during T cell activation. Phosphorylated by LRRK2.

The protein resides in the cytoplasm. Its subcellular location is the cell membrane. The protein localises to the membrane raft. It is found in the lipid droplet. The catalysed reaction is L-seryl-[protein] + ATP = O-phospho-L-seryl-[protein] + ADP + H(+). It carries out the reaction L-threonyl-[protein] + ATP = O-phospho-L-threonyl-[protein] + ADP + H(+). In terms of biological role, serine/threonine-protein kinase that acts as a regulator of the p38/MAPK14 stress-activated MAPK cascade and of the MAPK8/JNK cascade. In response to DNA damage, involved in the G2/M transition DNA damage checkpoint by activating the p38/MAPK14 stress-activated MAPK cascade, probably by mediating phosphorylation of upstream MAP2K3 and MAP2K6 kinases. Inhibits basal activity of the MAPK8/JNK cascade and diminishes its activation in response to epidermal growth factor (EGF). Positively regulates canonical T cell receptor (TCR) signaling by preventing early PTPN6/SHP1-mediated inactivation of LCK, ensuring sustained TCR signaling that is required for optimal activation and differentiation of T cells. Phosphorylates PTPN6/SHP1 on 'Thr-394', leading to its polyubiquitination and subsequent proteasomal degradation. Required for cell surface expression of metalloprotease ADAM10 on type 1 transitional B cells which is necessary for their NOTCH-mediated development into marginal zone B cells. Also required for the NOTCH-mediated terminal differentiation of splenic conventional type 2 dendritic cells. Positively regulates osteoblast differentiation by acting as an upstream activator of the JNK pathway. Promotes JNK signaling in hepatocytes and positively regulates hepatocyte lipid storage by inhibiting beta-oxidation and triacylglycerol secretion while enhancing lipid synthesis. Restricts age-associated inflammation by negatively regulating differentiation of macrophages and their production of pro-inflammatory cytokines. Plays a role in negatively regulating the abundance of regulatory T cells in white adipose tissue. This chain is Serine/threonine-protein kinase TAO3 (TAOK3), found in Pongo abelii (Sumatran orangutan).